An 880-amino-acid polypeptide reads, in one-letter code: Alanine--tRNA ligase (880 aa).

Zn(2+) is bound by residues histidine 569, histidine 573, cysteine 671, and histidine 675.

It belongs to the class-II aminoacyl-tRNA synthetase family. As to quaternary structure, homotetramer. The cofactor is Zn(2+).

The protein localises to the cytoplasm. The catalysed reaction is tRNA(Ala) + L-alanine + ATP = L-alanyl-tRNA(Ala) + AMP + diphosphate. Catalyzes the attachment of alanine to tRNA(Ala) in a two-step reaction: alanine is first activated by ATP to form Ala-AMP and then transferred to the acceptor end of tRNA(Ala). Also edits incorrectly charged Ser-tRNA(Ala) and Gly-tRNA(Ala) via its editing domain. In Buchnera aphidicola subsp. Baizongia pistaciae (strain Bp), this protein is Alanine--tRNA ligase.